A 246-amino-acid polypeptide reads, in one-letter code: 2-deoxyglucose-6-phosphate phosphatase 2 (246 aa).

Catalysis depends on Asp83, which acts as the Nucleophile. Asp83 serves as a coordination point for Mg(2+). Substrate is bound by residues Asp83, Glu92, and 146–149 (DVKN). Asp183 contacts Mg(2+).

It belongs to the HAD-like hydrolase superfamily. DOG/GPP family. The cofactor is Mg(2+).

The enzyme catalyses 2-deoxy-D-glucose 6-phosphate + H2O = 2-deoxy-D-glucose + phosphate. In terms of biological role, phosphatase that is active on 2-deoxy-D-glucose 6-phosphate (2-DOG-6P), but not very active on fructose-1-P. The sequence is that of 2-deoxyglucose-6-phosphate phosphatase 2 from Saccharomyces cerevisiae (strain ATCC 204508 / S288c) (Baker's yeast).